A 187-amino-acid polypeptide reads, in one-letter code: MPPSPPKSPFISSSLKGAHEDRKFKCYRGVRKRSWGKWVSEIRVPKTGRRIWLGSYDAPEKAARAYDAALFCIRGEKGVYNFPTDKKPQLPEGSVRPLSKLDIQTIATNYASSVVHVPSHATTLPATTQVPSEVPASSDVSASTEITEMVDEYYLPTDATAESIFSVEDLQLDSFLMMDIDWINNLI.

Residues 26 to 83 (CYRGVRKRSWGKWVSEIRVPKTGRRIWLGSYDAPEKAARAYDAALFCIRGEKGVYNFP) constitute a DNA-binding region (AP2/ERF).

Belongs to the AP2/ERF transcription factor family. ERF subfamily.

The protein resides in the nucleus. In terms of biological role, probably acts as a transcriptional activator. Binds to the GCC-box pathogenesis-related promoter element. May be involved in the regulation of gene expression by stress factors and by components of stress signal transduction pathways. This Arabidopsis thaliana (Mouse-ear cress) protein is Ethylene-responsive transcription factor ERF015 (ERF015).